Here is a 1087-residue protein sequence, read N- to C-terminus: Transcription factor AP2-Z (1087 aa).

The segment at residues 586-682 (GRVYKVIVRG…IKYNSVPDSL (97 aa)) is a DNA-binding region (AP2).

Belongs to the AP2/ERF transcription factor family. AP2 subfamily.

The protein resides in the nucleus. It is found in the chromosome. Its function is as follows. Transcription factor which binds the 5'-[TC][AC]TG[AT]AC[AG]-3' motif. During the mosquito vector stage, plays an essential role in the zygote for de novo transcription of genes required for ookinete formation. The chain is Transcription factor AP2-Z from Plasmodium berghei (strain Anka).